Here is a 177-residue protein sequence, read N- to C-terminus: dCTP deaminase, dUMP-forming (177 aa).

DCTP contacts are provided by residues 95–100 (RSSLGR), Asp112, 120–122 (TLE), Gln141, Tyr155, and Gln162. Glu122 (proton donor/acceptor) is an active-site residue.

This sequence belongs to the dCTP deaminase family. Homotrimer.

The enzyme catalyses dCTP + 2 H2O = dUMP + NH4(+) + diphosphate. It participates in pyrimidine metabolism; dUMP biosynthesis; dUMP from dCTP: step 1/1. Bifunctional enzyme that catalyzes both the deamination of dCTP to dUTP and the hydrolysis of dUTP to dUMP without releasing the toxic dUTP intermediate. The chain is dCTP deaminase, dUMP-forming from Hydrogenobaculum sp. (strain Y04AAS1).